A 239-amino-acid chain; its full sequence is 1-(5-phosphoribosyl)-5-[(5-phosphoribosylamino)methylideneamino] imidazole-4-carboxamide isomerase (239 aa).

The active-site Proton acceptor is the Asp8. The Proton donor role is filled by Asp129.

It belongs to the HisA/HisF family.

The protein resides in the cytoplasm. The catalysed reaction is 1-(5-phospho-beta-D-ribosyl)-5-[(5-phospho-beta-D-ribosylamino)methylideneamino]imidazole-4-carboxamide = 5-[(5-phospho-1-deoxy-D-ribulos-1-ylimino)methylamino]-1-(5-phospho-beta-D-ribosyl)imidazole-4-carboxamide. It functions in the pathway amino-acid biosynthesis; L-histidine biosynthesis; L-histidine from 5-phospho-alpha-D-ribose 1-diphosphate: step 4/9. This Bacillus cereus (strain B4264) protein is 1-(5-phosphoribosyl)-5-[(5-phosphoribosylamino)methylideneamino] imidazole-4-carboxamide isomerase.